Reading from the N-terminus, the 354-residue chain is Phosphate acyltransferase (354 aa).

It belongs to the PlsX family. Homodimer. Probably interacts with PlsY.

The protein resides in the cytoplasm. It carries out the reaction a fatty acyl-[ACP] + phosphate = an acyl phosphate + holo-[ACP]. It participates in lipid metabolism; phospholipid metabolism. Catalyzes the reversible formation of acyl-phosphate (acyl-PO(4)) from acyl-[acyl-carrier-protein] (acyl-ACP). This enzyme utilizes acyl-ACP as fatty acyl donor, but not acyl-CoA. The polypeptide is Phosphate acyltransferase (Ralstonia nicotianae (strain ATCC BAA-1114 / GMI1000) (Ralstonia solanacearum)).